An 862-amino-acid chain; its full sequence is Protein argonaute-2 (862 aa).

Residues 232-351 form the PAZ domain; it reads PVIEFMCEVL…LPLEVCNIVA (120 aa). Interaction with guide RNA regions lie at residues 314 to 319 and 527 to 569; these read YFKDRH and GKTP…LCLK. The region spanning 520–821 is the Piwi domain; that stretch reads LVVVILPGKT…VAFRARYHLV (302 aa). The segment at 590 to 593 is interaction with GW182 family members; sequence FQQP. Aspartate 600 is an a divalent metal cation binding site. The interaction with GW182 family members stretch occupies residues 653 to 663; the sequence is LIQFYKSTRFK. Aspartate 672 contributes to the a divalent metal cation binding site. Interaction with guide RNA regions lie at residues 712–713, 756–764, and 793–815; these read KR, HAGIQGTSR, and YVRC…VAFR. Histidine 810 provides a ligand contact to a divalent metal cation. The disordered stretch occupies residues 825-847; the sequence is HDSAEGSHTSGQSNGRDQQALAK. Positions 830-841 are enriched in polar residues; the sequence is GSHTSGQSNGRD.

This sequence belongs to the argonaute family. Ago subfamily. In terms of assembly, component of the RISC loading complex (RLC), or micro-RNA (miRNA) loading complex (miRLC), which is composed of dicer1, ago2 and tarbp2. Note that the trimeric RLC/miRLC is also referred to as RISC. It depends on Mg(2+) as a cofactor. Mn(2+) serves as cofactor.

It localises to the cytoplasm. Its subcellular location is the P-body. It catalyses the reaction Endonucleolytic cleavage to 5'-phosphomonoester.. Its function is as follows. Required for RNA-mediated gene silencing (RNAi) by the RNA-induced silencing complex (RISC). The 'minimal RISC' appears to include ago2 bound to a short guide RNA such as a microRNA (miRNA) or short interfering RNA (siRNA). These guide RNAs direct RISC to complementary mRNAs that are targets for RISC-mediated gene silencing. The precise mechanism of gene silencing depends on the degree of complementarity between the miRNA or siRNA and its target. Binding of RISC to a perfectly complementary mRNA generally results in silencing due to endonucleolytic cleavage of the mRNA specifically by ago2. Binding of RISC to a partially complementary mRNA results in silencing through inhibition of translation, and this is independent of endonuclease activity. The inhibition of translational initiation leads to the accumulation of the affected mRNA in cytoplasmic processing bodies (P-bodies), where mRNA degradation may subsequently occur. This Xenopus laevis (African clawed frog) protein is Protein argonaute-2 (ago2).